The chain runs to 250 residues: Small ribosomal subunit protein uS2 (250 aa).

This sequence belongs to the universal ribosomal protein uS2 family.

This Polaromonas sp. (strain JS666 / ATCC BAA-500) protein is Small ribosomal subunit protein uS2.